The primary structure comprises 257 residues: MADS-box transcription factor 1 (257 aa).

The MADS-box domain maps to 1-61; sequence MGRGKVELKR…GRLFEFSSSS (61 aa). Residues 85–175 enclose the K-box domain; that stretch reads NEINYQEYLK…RKKLQETSAE (91 aa).

As to quaternary structure, may interact with the K-box of MADS6, MADS14 and MADS15.

It is found in the nucleus. Functionally, probable transcription factor involved in the development of floral organs. Required for the formation of inner floral organs (lodicules, stamens and carpels, or whorls 2, 3 and 4) and the lemma and palea (whorl 1), which are grass floral organs analogous to sepals. May be involved in the control of flowering time. Seems to act as transcriptional activator. May act upstream of the auxin-responsive protein GH3.8. This Oryza sativa subsp. indica (Rice) protein is MADS-box transcription factor 1 (MADS1).